Reading from the N-terminus, the 638-residue chain is Terrein cluster-specific transcription factor terR (638 aa).

Positions 50 to 76 (CDMCKSKKVRCDGGTPCSYCNLHDLRC) form a DNA-binding region, zn(2)-C6 fungal-type.

The protein resides in the nucleus. Transcription factor that regulates specifically the terrein biosynthesis gene cluster. Recognizes CGG direct repeat consensus sequences in the terrein cluster forming the high affinity consensus motif TCGGHHWYHCGGH. The protein is Terrein cluster-specific transcription factor terR of Aspergillus terreus (strain NIH 2624 / FGSC A1156).